An 878-amino-acid polypeptide reads, in one-letter code: Probable di- and tripeptidase DUG2 (878 aa).

5 WD repeats span residues 18-57 (NHAF…LIHT), 68-107 (HTRS…IRDD), 235-274 (RFNQ…GQNT), 282-322 (DKID…IIST), and 362-405 (PQQG…SAVP). H520 provides a ligand contact to Zn(2+). Residue D522 is part of the active site. D553 serves as a coordination point for Zn(2+). Catalysis depends on E586, which acts as the Proton acceptor. E587 contacts Zn(2+). A WD 6 repeat occupies 608 to 651 (IDWILLSNSTWVDQEHPCLNYGLRGVINAQIKVWSDKPDGHSGL). H853 contributes to the Zn(2+) binding site.

Belongs to the peptidase M20A family. In terms of assembly, component of the GSH degradosomal complex composed of at least DUG1, DUG2 and DUG3. The cofactor is Zn(2+).

It localises to the cytoplasm. Its subcellular location is the nucleus. In terms of biological role, component of the GSH degradosomal complex involved in the degradation of glutathione (GSH) and other peptides containing a gamma-glu-X bond. The sequence is that of Probable di- and tripeptidase DUG2 (DUG2) from Saccharomyces cerevisiae (strain ATCC 204508 / S288c) (Baker's yeast).